A 365-amino-acid polypeptide reads, in one-letter code: Peptide chain release factor 2 (365 aa).

Q252 is subject to N5-methylglutamine.

It belongs to the prokaryotic/mitochondrial release factor family. Methylated by PrmC. Methylation increases the termination efficiency of RF2.

It localises to the cytoplasm. Peptide chain release factor 2 directs the termination of translation in response to the peptide chain termination codons UGA and UAA. This Salmonella typhimurium (strain LT2 / SGSC1412 / ATCC 700720) protein is Peptide chain release factor 2 (prfB).